A 60-amino-acid polypeptide reads, in one-letter code: MKNTILILFTAFIALLGFFGMIAEPLADPLADPLPDADPDADPETVIVKAIATLSKKLLR.

A signal peptide spans 1–27 (MKNTILILFTAFIALLGFFGMIAEPLA). AXPX repeat units lie at residues 27 to 30 (ADPL), 31 to 34 (ADPL), 37 to 40 (ADPD), and 41 to 44 (ADPE). A propeptide spanning residues 28-45 (DPLADPLPDADPDADPET) is cleaved from the precursor.

The protein belongs to the MCD family. Mastoparan subfamily. Expressed by the venom gland.

It localises to the secreted. The synthetic peptide shows weak antimicrobial activities against a few Gram-positive bacteria (only 2 on the 11 strains tested) and the fungus C.albicans. Does not show activity against all the Gram-negative bacteria tested. Exhibits little hemolytic activity against washed human erythrocytes. The chain is Mastoparan-VT5 from Vespa tropica (Greater banded hornet).